The chain runs to 140 residues: Ribonuclease P protein component (140 aa).

The interval 33–54 (RALKPSSAKKSSLDTAAKTQPA) is disordered.

This sequence belongs to the RnpA family. In terms of assembly, consists of a catalytic RNA component (M1 or rnpB) and a protein subunit.

It catalyses the reaction Endonucleolytic cleavage of RNA, removing 5'-extranucleotides from tRNA precursor.. Functionally, RNaseP catalyzes the removal of the 5'-leader sequence from pre-tRNA to produce the mature 5'-terminus. It can also cleave other RNA substrates such as 4.5S RNA. The protein component plays an auxiliary but essential role in vivo by binding to the 5'-leader sequence and broadening the substrate specificity of the ribozyme. In Trichormus variabilis (strain ATCC 29413 / PCC 7937) (Anabaena variabilis), this protein is Ribonuclease P protein component.